Here is a 775-residue protein sequence, read N- to C-terminus: Cation channel sperm-associated protein subunit epsilon-like protein (775 aa).

Residues 1-20 (MLARRVVAALLLWLSCCVSA) form the signal peptide. 2 N-linked (GlcNAc...) asparagine glycosylation sites follow: Asn62 and Asn114.

The protein belongs to the CATSPERD family.

The sequence is that of Cation channel sperm-associated protein subunit epsilon-like protein from Mus musculus (Mouse).